The chain runs to 336 residues: Pyridoxal 5'-phosphate synthase subunit PdxS (336 aa).

A D-ribose 5-phosphate-binding site is contributed by Asp-30. The Schiff-base intermediate with D-ribose 5-phosphate role is filled by Lys-87. Gly-159 contributes to the D-ribose 5-phosphate binding site. Position 171 (Arg-171) interacts with D-glyceraldehyde 3-phosphate. Residues Gly-257 and 278–279 (GS) each bind D-ribose 5-phosphate.

The protein belongs to the PdxS/SNZ family. In terms of assembly, in the presence of PdxT, forms a dodecamer of heterodimers.

The enzyme catalyses aldehydo-D-ribose 5-phosphate + D-glyceraldehyde 3-phosphate + L-glutamine = pyridoxal 5'-phosphate + L-glutamate + phosphate + 3 H2O + H(+). It participates in cofactor biosynthesis; pyridoxal 5'-phosphate biosynthesis. Its function is as follows. Catalyzes the formation of pyridoxal 5'-phosphate from ribose 5-phosphate (RBP), glyceraldehyde 3-phosphate (G3P) and ammonia. The ammonia is provided by the PdxT subunit. Can also use ribulose 5-phosphate and dihydroxyacetone phosphate as substrates, resulting from enzyme-catalyzed isomerization of RBP and G3P, respectively. The chain is Pyridoxal 5'-phosphate synthase subunit PdxS from Thermoplasma volcanium (strain ATCC 51530 / DSM 4299 / JCM 9571 / NBRC 15438 / GSS1).